Consider the following 741-residue polypeptide: Phosphoribosylformylglycinamidine synthase subunit PurL (741 aa).

His-53 is a catalytic residue. Tyr-56 and Lys-95 together coordinate ATP. Glu-97 provides a ligand contact to Mg(2+). Substrate is bound by residues 98–101 (SHNH) and Arg-120. Catalysis depends on His-99, which acts as the Proton acceptor. Asp-121 is a Mg(2+) binding site. Gln-244 lines the substrate pocket. Position 274 (Asp-274) interacts with Mg(2+). 318 to 320 (ESQ) contributes to the substrate binding site. 2 residues coordinate ATP: Asp-501 and Gly-538. Asn-539 serves as a coordination point for Mg(2+). Ser-541 is a binding site for substrate.

It belongs to the FGAMS family. Monomer. Part of the FGAM synthase complex composed of 1 PurL, 1 PurQ and 2 PurS subunits.

The protein resides in the cytoplasm. The catalysed reaction is N(2)-formyl-N(1)-(5-phospho-beta-D-ribosyl)glycinamide + L-glutamine + ATP + H2O = 2-formamido-N(1)-(5-O-phospho-beta-D-ribosyl)acetamidine + L-glutamate + ADP + phosphate + H(+). Its pathway is purine metabolism; IMP biosynthesis via de novo pathway; 5-amino-1-(5-phospho-D-ribosyl)imidazole from N(2)-formyl-N(1)-(5-phospho-D-ribosyl)glycinamide: step 1/2. In terms of biological role, part of the phosphoribosylformylglycinamidine synthase complex involved in the purines biosynthetic pathway. Catalyzes the ATP-dependent conversion of formylglycinamide ribonucleotide (FGAR) and glutamine to yield formylglycinamidine ribonucleotide (FGAM) and glutamate. The FGAM synthase complex is composed of three subunits. PurQ produces an ammonia molecule by converting glutamine to glutamate. PurL transfers the ammonia molecule to FGAR to form FGAM in an ATP-dependent manner. PurS interacts with PurQ and PurL and is thought to assist in the transfer of the ammonia molecule from PurQ to PurL. In Ligilactobacillus salivarius (strain UCC118) (Lactobacillus salivarius), this protein is Phosphoribosylformylglycinamidine synthase subunit PurL.